The sequence spans 289 residues: Protease HtpX homolog (289 aa).

Helical transmembrane passes span 7 to 26 (TAAL…YWVI) and 31 to 48 (GLII…FSWY). His-132 is a Zn(2+) binding site. Glu-133 is an active-site residue. Position 136 (His-136) interacts with Zn(2+). 2 consecutive transmembrane segments (helical) span residues 151 to 171 (VAGA…FGGG) and 182 to 202 (LGVL…QLAI). Glu-207 is a binding site for Zn(2+).

The protein belongs to the peptidase M48B family. Zn(2+) serves as cofactor.

It localises to the cell inner membrane. The chain is Protease HtpX homolog from Nostoc punctiforme (strain ATCC 29133 / PCC 73102).